The sequence spans 697 residues: Portal protein (697 aa).

The tract at residues 633 to 697 (MSREAAGGVP…RRAGGPYGFH (65 aa)) is disordered. Over residues 664–689 (ITADEERRGPERVGRFRNGGPDDPRR) the composition is skewed to basic and acidic residues.

The protein belongs to the herpesviridae portal protein family. In terms of assembly, homododecamerizes. Interacts with terminase subunits TRM1 and TRM3.

It is found in the virion. Its subcellular location is the host nucleus. Its function is as follows. Forms a portal in the viral capsid through which viral DNA is translocated during DNA packaging. Assembles as a dodecamer at a single fivefold axe of the T=16 icosahedric capsid. Binds to the molecular motor that translocates the viral DNA, termed terminase. In Homo sapiens (Human), this protein is Portal protein (UL104).